A 165-amino-acid polypeptide reads, in one-letter code: Nucleotide-binding protein Syncc9902_1708 (165 aa).

Belongs to the YajQ family.

Its function is as follows. Nucleotide-binding protein. This Synechococcus sp. (strain CC9902) protein is Nucleotide-binding protein Syncc9902_1708.